Here is a 601-residue protein sequence, read N- to C-terminus: DNA replication licensing factor MCM3 (601 aa).

Positions 180-386 constitute an MCM domain; that stretch reads PINLLSKSIA…LDRRLSQHVL (207 aa). 229 to 236 is an ATP binding site; that stretch reads GDPSTAKS. The short motif at 361 to 364 is the Arginine finger element; that stretch reads SRFD.

Belongs to the MCM family. Component of the MCM2-7 complex.

It is found in the nucleus. It localises to the chromosome. The protein localises to the nucleoplasm. It catalyses the reaction ATP + H2O = ADP + phosphate + H(+). In terms of biological role, acts as a component of the MCM2-7 complex (MCM complex) which is the replicative helicase essential for DNA replication initiation and elongation in eukaryotic cells. Required for DNA replication and cell proliferation. The active ATPase sites in the MCM2-7 ring are formed through the interaction surfaces of two neighboring subunits such that a critical structure of a conserved arginine finger motif is provided in trans relative to the ATP-binding site of the Walker A box of the adjacent subunit. The chain is DNA replication licensing factor MCM3 from Entamoeba histolytica (strain ATCC 30459 / HM-1:IMSS / ABRM).